The following is a 140-amino-acid chain: Large ribosomal subunit protein bL17 (140 aa).

This sequence belongs to the bacterial ribosomal protein bL17 family. As to quaternary structure, part of the 50S ribosomal subunit. Contacts protein L32.

This chain is Large ribosomal subunit protein bL17, found in Rhizobium johnstonii (strain DSM 114642 / LMG 32736 / 3841) (Rhizobium leguminosarum bv. viciae).